We begin with the raw amino-acid sequence, 325 residues long: Phenylalanine--tRNA ligase alpha subunit (325 aa).

Residue E251 coordinates Mg(2+).

The protein belongs to the class-II aminoacyl-tRNA synthetase family. Phe-tRNA synthetase alpha subunit type 1 subfamily. As to quaternary structure, tetramer of two alpha and two beta subunits. Mg(2+) serves as cofactor.

The protein localises to the cytoplasm. The enzyme catalyses tRNA(Phe) + L-phenylalanine + ATP = L-phenylalanyl-tRNA(Phe) + AMP + diphosphate + H(+). The protein is Phenylalanine--tRNA ligase alpha subunit of Thermotoga petrophila (strain ATCC BAA-488 / DSM 13995 / JCM 10881 / RKU-1).